We begin with the raw amino-acid sequence, 465 residues long: Adenosylhomocysteinase (465 aa).

Residues threonine 56, aspartate 131, and glutamate 191 each coordinate substrate. 192-194 (TTT) is an NAD(+) binding site. Residues lysine 221 and aspartate 225 each coordinate substrate. NAD(+)-binding positions include asparagine 226, 255–260 (GYGDVG), glutamate 278, asparagine 313, 334–336 (IGH), and asparagine 379.

The protein belongs to the adenosylhomocysteinase family. Requires NAD(+) as cofactor.

The protein resides in the cytoplasm. The enzyme catalyses S-adenosyl-L-homocysteine + H2O = L-homocysteine + adenosine. It participates in amino-acid biosynthesis; L-homocysteine biosynthesis; L-homocysteine from S-adenosyl-L-homocysteine: step 1/1. May play a key role in the regulation of the intracellular concentration of adenosylhomocysteine. This Chelativorans sp. (strain BNC1) protein is Adenosylhomocysteinase.